The primary structure comprises 345 residues: ATP-dependent (S)-NAD(P)H-hydrate dehydratase (345 aa).

Residues 9–332 form the YjeF C-terminal domain; it reads ILSLARSMIP…DMVGEVYEEV (324 aa). (6S)-NADPHX-binding positions include Gly-113 and 170–176; that span reads NVMEFKR. ATP contacts are provided by residues 208–212 and 241–250; these read KGPSD and GGLKRVGGQG. Residue Asp-251 coordinates (6S)-NADPHX.

Belongs to the NnrD/CARKD family. Requires Mg(2+) as cofactor.

It is found in the cytoplasm. The enzyme catalyses (6S)-NADHX + ATP = ADP + phosphate + NADH + H(+). It carries out the reaction (6S)-NADPHX + ATP = ADP + phosphate + NADPH + H(+). Catalyzes the dehydration of the S-form of NAD(P)HX at the expense of ATP, which is converted to ADP. Together with NAD(P)HX epimerase, which catalyzes the epimerization of the S- and R-forms, the enzyme allows the repair of both epimers of NAD(P)HX, a damaged form of NAD(P)H that is a result of enzymatic or heat-dependent hydration. The protein is ATP-dependent (S)-NAD(P)H-hydrate dehydratase of Cryptococcus neoformans var. neoformans serotype D (strain JEC21 / ATCC MYA-565) (Filobasidiella neoformans).